The primary structure comprises 463 residues: Argininosuccinate lyase (463 aa).

This sequence belongs to the lyase 1 family. Argininosuccinate lyase subfamily.

It is found in the cytoplasm. The enzyme catalyses 2-(N(omega)-L-arginino)succinate = fumarate + L-arginine. It participates in amino-acid biosynthesis; L-arginine biosynthesis; L-arginine from L-ornithine and carbamoyl phosphate: step 3/3. The polypeptide is Argininosuccinate lyase (Ruegeria pomeroyi (strain ATCC 700808 / DSM 15171 / DSS-3) (Silicibacter pomeroyi)).